We begin with the raw amino-acid sequence, 561 residues long: 4-coumarate--CoA ligase 1 (561 aa).

ATP is bound by residues Ser-210, Ser-211, Gly-212, Thr-213, Thr-214, and Lys-218. 2 residues coordinate (E)-4-coumaroyl-AMP: Tyr-260 and Ser-264. Residue Lys-281 participates in CoA binding. The interval 283-352 (EINLLLELIQ…AKFPNAKLGQ (70 aa)) is SBD1. The (E)-4-coumaroyl-AMP site is built by Ala-330, Gln-352, Gly-353, Thr-357, and Met-365. ATP contacts are provided by Gln-352, Gly-353, and Thr-357. Positions 353–420 (GYGMTEAGPV…IRGHQIMKGY (68 aa)) are SBD2. 2 residues coordinate ATP: Asp-441 and Arg-456. (E)-4-coumaroyl-AMP is bound by residues Lys-458 and Lys-462. Lys-464 and Gly-465 together coordinate CoA. Lys-547 serves as a coordination point for ATP.

This sequence belongs to the ATP-dependent AMP-binding enzyme family. Mg(2+) serves as cofactor. In terms of tissue distribution, preferentially expressed in roots, bolting stems and siliques. Also detected in leaves.

The enzyme catalyses (E)-4-coumarate + ATP + CoA = (E)-4-coumaroyl-CoA + AMP + diphosphate. The catalysed reaction is (E)-caffeate + ATP + CoA = (E)-caffeoyl-CoA + AMP + diphosphate. It carries out the reaction (E)-ferulate + ATP + CoA = (E)-feruloyl-CoA + AMP + diphosphate. It catalyses the reaction (E)-4-coumarate + ATP + H(+) = (E)-4-coumaroyl-AMP + diphosphate. The enzyme catalyses (E)-4-coumaroyl-AMP + CoA = (E)-4-coumaroyl-CoA + AMP + H(+). The catalysed reaction is (E)-caffeate + ATP + H(+) = (E)-caffeoyl-AMP + diphosphate. It carries out the reaction (E)-caffeoyl-AMP + CoA = (E)-caffeoyl-CoA + AMP + H(+). It catalyses the reaction (E)-ferulate + ATP + H(+) = (E)-feruloyl-AMP + diphosphate. The enzyme catalyses (E)-feruloyl-AMP + CoA = (E)-feruloyl-CoA + AMP + H(+). The protein operates within phytoalexin biosynthesis; 3,4',5-trihydroxystilbene biosynthesis; 3,4',5-trihydroxystilbene from trans-4-coumarate: step 1/2. Functionally, produces CoA thioesters of a variety of hydroxy- and methoxy-substituted cinnamic acids, which are used to synthesize several phenylpropanoid-derived compounds, including anthocyanins, flavonoids, isoflavonoids, coumarins, lignin, suberin and wall-bound phenolics. Follows a two-step reaction mechanism, wherein the carboxylate substrate first undergoes adenylation by ATP, followed by a thioesterification in the presence of CoA to yield the final CoA thioesters. The polypeptide is 4-coumarate--CoA ligase 1 (Arabidopsis thaliana (Mouse-ear cress)).